Reading from the N-terminus, the 133-residue chain is Small ribosomal subunit protein uS11 (133 aa).

It belongs to the universal ribosomal protein uS11 family. Part of the 30S ribosomal subunit.

Located on the platform of the 30S subunit. The chain is Small ribosomal subunit protein uS11 from Hyperthermus butylicus (strain DSM 5456 / JCM 9403 / PLM1-5).